Here is a 251-residue protein sequence, read N- to C-terminus: 5'-nucleotidase SurE (251 aa).

A divalent metal cation contacts are provided by Asp8, Asp9, Ser39, and Asn95.

It belongs to the SurE nucleotidase family. The cofactor is a divalent metal cation.

The protein resides in the cytoplasm. It catalyses the reaction a ribonucleoside 5'-phosphate + H2O = a ribonucleoside + phosphate. Nucleotidase that shows phosphatase activity on nucleoside 5'-monophosphates. The protein is 5'-nucleotidase SurE of Clostridium botulinum (strain Alaska E43 / Type E3).